The sequence spans 213 residues: Kynurenine formamidase (213 aa).

Residue W18 coordinates substrate. Residues H48, H52, and D54 each contribute to the Zn(2+) site. Catalysis depends on H58, which acts as the Proton donor/acceptor. H160 and E172 together coordinate Zn(2+).

This sequence belongs to the Cyclase 1 superfamily. KynB family. As to quaternary structure, homodimer. Zn(2+) serves as cofactor.

It catalyses the reaction N-formyl-L-kynurenine + H2O = L-kynurenine + formate + H(+). The protein operates within amino-acid degradation; L-tryptophan degradation via kynurenine pathway; L-kynurenine from L-tryptophan: step 2/2. In terms of biological role, catalyzes the hydrolysis of N-formyl-L-kynurenine to L-kynurenine, the second step in the kynurenine pathway of tryptophan degradation. In Burkholderia ambifaria (strain ATCC BAA-244 / DSM 16087 / CCUG 44356 / LMG 19182 / AMMD) (Burkholderia cepacia (strain AMMD)), this protein is Kynurenine formamidase.